A 399-amino-acid polypeptide reads, in one-letter code: CCA-adding enzyme (399 aa).

ATP is bound by residues glycine 32 and arginine 35. 2 residues coordinate CTP: glycine 32 and arginine 35. Residues aspartate 45 and aspartate 47 each contribute to the Mg(2+) site. Residues arginine 116, aspartate 159, arginine 162, arginine 165, and arginine 168 each contribute to the ATP site. CTP is bound by residues arginine 116, aspartate 159, arginine 162, arginine 165, and arginine 168.

It belongs to the tRNA nucleotidyltransferase/poly(A) polymerase family. Bacterial CCA-adding enzyme type 3 subfamily. In terms of assembly, homodimer. Mg(2+) serves as cofactor.

The enzyme catalyses a tRNA precursor + 2 CTP + ATP = a tRNA with a 3' CCA end + 3 diphosphate. It carries out the reaction a tRNA with a 3' CCA end + 2 CTP + ATP = a tRNA with a 3' CCACCA end + 3 diphosphate. Functionally, catalyzes the addition and repair of the essential 3'-terminal CCA sequence in tRNAs without using a nucleic acid template. Adds these three nucleotides in the order of C, C, and A to the tRNA nucleotide-73, using CTP and ATP as substrates and producing inorganic pyrophosphate. tRNA 3'-terminal CCA addition is required both for tRNA processing and repair. Also involved in tRNA surveillance by mediating tandem CCA addition to generate a CCACCA at the 3' terminus of unstable tRNAs. While stable tRNAs receive only 3'-terminal CCA, unstable tRNAs are marked with CCACCA and rapidly degraded. The polypeptide is CCA-adding enzyme (Streptococcus sanguinis (strain SK36)).